The chain runs to 433 residues: 5-methylthioadenosine/S-adenosylhomocysteine deaminase (433 aa).

Residues His67 and His69 each coordinate Zn(2+). Residues Glu96, Arg148, and His186 each contribute to the substrate site. His213 contacts Zn(2+). Residues Glu216 and Asp301 each coordinate substrate. Zn(2+) is bound at residue Asp301.

This sequence belongs to the metallo-dependent hydrolases superfamily. MTA/SAH deaminase family. The cofactor is Zn(2+).

It carries out the reaction S-adenosyl-L-homocysteine + H2O + H(+) = S-inosyl-L-homocysteine + NH4(+). The enzyme catalyses S-methyl-5'-thioadenosine + H2O + H(+) = S-methyl-5'-thioinosine + NH4(+). Functionally, catalyzes the deamination of 5-methylthioadenosine and S-adenosyl-L-homocysteine into 5-methylthioinosine and S-inosyl-L-homocysteine, respectively. Is also able to deaminate adenosine. The polypeptide is 5-methylthioadenosine/S-adenosylhomocysteine deaminase (Desulforamulus reducens (strain ATCC BAA-1160 / DSM 100696 / MI-1) (Desulfotomaculum reducens)).